We begin with the raw amino-acid sequence, 319 residues long: Methionyl-tRNA formyltransferase (319 aa).

116–119 (SLLP) lines the (6S)-5,6,7,8-tetrahydrofolate pocket.

Belongs to the Fmt family.

The enzyme catalyses L-methionyl-tRNA(fMet) + (6R)-10-formyltetrahydrofolate = N-formyl-L-methionyl-tRNA(fMet) + (6S)-5,6,7,8-tetrahydrofolate + H(+). Its function is as follows. Attaches a formyl group to the free amino group of methionyl-tRNA(fMet). The formyl group appears to play a dual role in the initiator identity of N-formylmethionyl-tRNA by promoting its recognition by IF2 and preventing the misappropriation of this tRNA by the elongation apparatus. This is Methionyl-tRNA formyltransferase from Wigglesworthia glossinidia brevipalpis.